The primary structure comprises 129 residues: Small ribosomal subunit protein uS11 (129 aa).

Belongs to the universal ribosomal protein uS11 family. In terms of assembly, part of the 30S ribosomal subunit. Interacts with proteins S7 and S18. Binds to IF-3.

Located on the platform of the 30S subunit, it bridges several disparate RNA helices of the 16S rRNA. Forms part of the Shine-Dalgarno cleft in the 70S ribosome. This chain is Small ribosomal subunit protein uS11, found in Carboxydothermus hydrogenoformans (strain ATCC BAA-161 / DSM 6008 / Z-2901).